Here is a 122-residue protein sequence, read N- to C-terminus: Urease subunit beta (122 aa).

The protein belongs to the urease beta subunit family. In terms of assembly, heterotrimer of UreA (gamma), UreB (beta) and UreC (alpha) subunits. Three heterotrimers associate to form the active enzyme.

Its subcellular location is the cytoplasm. The catalysed reaction is urea + 2 H2O + H(+) = hydrogencarbonate + 2 NH4(+). It functions in the pathway nitrogen metabolism; urea degradation; CO(2) and NH(3) from urea (urease route): step 1/1. This Flavobacterium johnsoniae (strain ATCC 17061 / DSM 2064 / JCM 8514 / BCRC 14874 / CCUG 350202 / NBRC 14942 / NCIMB 11054 / UW101) (Cytophaga johnsonae) protein is Urease subunit beta.